The chain runs to 192 residues: Fanconi anemia core complex-associated protein 20 (192 aa).

The span at 1 to 16 (MEATRRSRLSLSRRRP) shows a compositional bias: basic residues. Disordered regions lie at residues 1 to 34 (MEAT…PDGG) and 51 to 151 (LNVD…SSVD). Positions 66-76 (QEPRRSPERPP) are enriched in basic and acidic residues. A phosphoserine mark is found at serine 119 and serine 149. Residues 132 to 149 (PSAEEQPSEEQPSQRQSS) are compositionally biased toward low complexity. A UBZ2-type zinc finger spans residues 156-192 (LQSCPMCQVDFAPGLAQLDIDGHLAQCLADSTDDIEW). Zn(2+)-binding residues include cysteine 159, cysteine 162, histidine 178, and cysteine 182.

Component of the Fanconi anemia (FA) complex. Interacts with FANCA; interaction is direct. Interacts with REV1.

It is found in the nucleus. The protein resides in the chromosome. Component of the Fanconi anemia (FA) complex required to recruit the FA complex to DNA interstrand cross-links (ICLs) and promote ICLs repair. Following DNA damage recognizes and binds 'Lys-63'-linked ubiquitin generated by RNF8 at ICLs and recruits other components of the FA complex. Promotes translesion synthesis via interaction with REV1. The sequence is that of Fanconi anemia core complex-associated protein 20 from Bos taurus (Bovine).